A 525-amino-acid chain; its full sequence is ALBINO3-like protein 2, chloroplastic (525 aa).

4 consecutive transmembrane segments (helical) span residues 99–119 (WMII…LLIL), 167–187 (LWFF…MASI), 217–237 (FGPV…QISF), and 262–282 (ILSV…LVYW). TPR repeat units follow at residues 346–379 (PEEL…DPGY), 380–413 (VRGL…LLDE), 425–458 (MLAS…REPG), and 467–500 (FEAL…NPAY).

Belongs to the OXA1/ALB3/YidC (TC 2.A.9.2) family.

The protein resides in the plastid. It is found in the chloroplast thylakoid membrane. Its function is as follows. Probably required for the insertion of integral membrane proteins into the chloroplast thylakoid membranes. The protein is ALBINO3-like protein 2, chloroplastic (ALB3L2) of Arabidopsis thaliana (Mouse-ear cress).